Reading from the N-terminus, the 367-residue chain is Cis-3-hydroxy-L-proline dehydratase (367 aa).

K165 acts as the Proton donor/acceptor in catalysis. Mg(2+) contacts are provided by D193, E218, and D241. K265 acts as the Proton donor/acceptor in catalysis.

Belongs to the mandelate racemase/muconate lactonizing enzyme family. Mg(2+) serves as cofactor.

The enzyme catalyses cis-3-hydroxy-L-proline = 1-pyrroline-2-carboxylate + H2O. In terms of biological role, catalyzes the dehydration of cis-3-hydroxy-L-proline (c3LHyp) to Delta(1)-pyrroline-2-carboxylate (Pyr2C). Is likely involved in a degradation pathway that converts c3LHyp to L-proline, which allows L.aggregata to grow on c3LHyp as a sole carbon source. Also catalyzes the epimerization of c3LHyp to trans-3-hydroxy-D-proline (t3DHyp), a competing reaction occurring from the same enolate anion intermediate. L-proline, t3LHyp, t4LHyp, c4DHyp and their methylated derivatives are not substrates. The protein is Cis-3-hydroxy-L-proline dehydratase of Roseibium aggregatum (strain ATCC 25650 / DSM 13394 / JCM 20685 / NBRC 16684 / NCIMB 2208 / IAM 12614 / B1) (Stappia aggregata).